Here is a 947-residue protein sequence, read N- to C-terminus: Pyruvate, phosphate dikinase 1, chloroplastic (947 aa).

Residues 1–71 (MPSVSRAVCV…PLRAVAAPIP (71 aa)) constitute a chloroplast transit peptide. The disordered stretch occupies residues 39 to 60 (RHGKPEVAIRSGSGGSARGGHC). Phosphothreonine; by PDRP1 is present on threonine 527. Histidine 529 acts as the Tele-phosphohistidine intermediate in catalysis. Residues arginine 635, arginine 692, glutamate 821, glycine 842, threonine 843, asparagine 844, and aspartate 845 each contribute to the substrate site. Glutamate 821 serves as a coordination point for Mg(2+). Aspartate 845 is a Mg(2+) binding site. Cysteine 907 (proton donor) is an active-site residue.

Belongs to the PEP-utilizing enzyme family. As to quaternary structure, homotetramer. It depends on Mg(2+) as a cofactor. Post-translationally, phosphorylation of Thr-527 in the dark inactivates the enzyme. Dephosphorylation upon light stimulation reactivates the enzyme. Phosphorylation increases during the first 20 days post-pollination and then remains constant through the 40-day mature seed stage. Reactivation by dephosphorylation during germination is negligible. As to expression, isoform 1 is only expressed in green leaves. Isoform 2 is found in roots, stems, rachis branches, leaf sheaths, green leaves and spikelets. The non-phosphorylated PPDK in mature seeds is endosperm-localized.

Its subcellular location is the plastid. It is found in the chloroplast. The protein resides in the cytoplasm. It carries out the reaction pyruvate + phosphate + ATP = phosphoenolpyruvate + AMP + diphosphate + H(+). Its activity is regulated as follows. Activated by light-induced dephosphorylation. Inhibited by dark-induced phosphorylation. Both reactions are catalyzed by PDRP1. In terms of biological role, formation of phosphoenolpyruvate. The cytoplasmic isoform supports the biosynthetic processes in the nascent endosperm and provides an efficient mechanism for glycolytic ATP synthesis in oxygen depleted tissues. May be involved in regulating the flux of carbon into starch and fatty acids of seeds and in the remobilization of nitrogen reserves in senescing leaves. The protein is Pyruvate, phosphate dikinase 1, chloroplastic (PPDK1) of Oryza sativa subsp. japonica (Rice).